Reading from the N-terminus, the 614-residue chain is Zinc metalloproteinase-disintegrin-like VLAIP-B (614 aa).

An N-terminal signal peptide occupies residues 1 to 20 (MMQVLLVTICLAVFPYQGSS). The propeptide occupies 21-193 (IILESGNVND…KASQLNLTPE (173 aa)). Residue Gln194 is modified to Pyrrolidone carboxylic acid. The region spanning 202-398 (KYVELVIVAD…KMPQCILNKP (197 aa)) is the Peptidase M12B domain. Glu205 provides a ligand contact to Ca(2+). An N-linked (GlcNAc...) asparagine glycan is attached at Asn262. Residue Asp289 participates in Ca(2+) binding. 3 disulfide bridges follow: Cys313–Cys393, Cys353–Cys377, and Cys355–Cys360. A Zn(2+)-binding site is contributed by His338. Residue Glu339 is part of the active site. His342 and His348 together coordinate Zn(2+). Cys393, Asn396, Val408, Asn411, Phe413, Glu415, Glu418, and Asp421 together coordinate Ca(2+). Residues 406 to 492 (PAVCGNYFVE…ECPTDQFQRN (87 aa)) form the Disintegrin domain. Disulfide bonds link Cys409/Cys438, Cys420/Cys433, Cys422/Cys428, Cys432/Cys455, Cys446/Cys452, Cys451/Cys477, Cys464/Cys484, Cys471/Cys503, Cys496/Cys508, Cys515/Cys565, Cys530/Cys576, Cys543/Cys553, Cys560/Cys602, and Cys596/Cys607. The short motif at 470-472 (ECD) is the D/ECD-tripeptide element. 3 N-linked (GlcNAc...) asparagine glycosylation sites follow: Asn505, Asn547, and Asn568.

This sequence belongs to the venom metalloproteinase (M12B) family. P-III subfamily. P-IIIc sub-subfamily. In terms of assembly, heterodimer; disulfide-linked. Zn(2+) is required as a cofactor. The N-terminus is blocked. In terms of tissue distribution, expressed by the venom gland.

The protein resides in the secreted. With respect to regulation, inhibited by EDTA or 1,10-phenanthroline. Not inhibited by PMSF. Its function is as follows. This metalloproteinase hydrolyzes azocasein, and insulin B-chain (at the '38-Ala-|-Leu-39' bond). Also hydrolyzes the Aalpha-chain (FGA) and more slowly the Bbeta-chain of fibrinogen (FGB), without affecting the gamma-chain. Cleaves alpha-chain of fibrinogen at '432-Lys-|-Leu-433' and '535-Pro-|-Met-536' bonds. Does not cleave fibrin. Inhibits endothelial cell adhesion to extracellular matrix proteins such as fibrinogen, fibronectin, vitronectin, collagen I, and collagen IV. Induces apoptosis in vascular endothelial cells. This chain is Zinc metalloproteinase-disintegrin-like VLAIP-B, found in Macrovipera lebetinus (Levantine viper).